Consider the following 628-residue polypeptide: Glutamine--fructose-6-phosphate aminotransferase [isomerizing] (628 aa).

Catalysis depends on C2, which acts as the Nucleophile; for GATase activity. The Glutamine amidotransferase type-2 domain maps to 2–229 (CGIVGYVGHR…QDQAVVLTAD (228 aa)). Positions 61 to 94 (ETDSNDGDGLGGSTGLGHTRWATHGRPTDRNAHP) are disordered. SIS domains follow at residues 301–440 (SDQE…ARGT) and 473–618 (LAER…VDKP). Residue K623 is the For Fru-6P isomerization activity of the active site.

In terms of assembly, homodimer.

It localises to the cytoplasm. The enzyme catalyses D-fructose 6-phosphate + L-glutamine = D-glucosamine 6-phosphate + L-glutamate. Its function is as follows. Catalyzes the first step in hexosamine metabolism, converting fructose-6P into glucosamine-6P using glutamine as a nitrogen source. The polypeptide is Glutamine--fructose-6-phosphate aminotransferase [isomerizing] (Mycolicibacterium smegmatis (strain ATCC 700084 / mc(2)155) (Mycobacterium smegmatis)).